A 132-amino-acid chain; its full sequence is Agouti-signaling protein (132 aa).

A signal peptide spans M1–S22. Residue N39 is glycosylated (N-linked (GlcNAc...) asparagine). The segment at Q61–T87 is disordered. Basic and acidic residues predominate over residues G63–M79. 5 cysteine pairs are disulfide-bonded: C93/C108, C100/C114, C107/C125, C111/C132, and C116/C123. The region spanning C93 to C132 is the Agouti domain.

The protein localises to the secreted. Its function is as follows. Involved in the regulation of melanogenesis. The binding of ASP to MC1R precludes alpha-MSH initiated signaling and thus blocks production of cAMP, leading to a down-regulation of eumelanogenesis (brown/black pigment) and thus increasing synthesis of pheomelanin (yellow/red pigment). This chain is Agouti-signaling protein (ASIP), found in Gorilla gorilla gorilla (Western lowland gorilla).